A 657-amino-acid chain; its full sequence is Glycogen debranching enzyme (657 aa).

D336 serves as the catalytic Nucleophile. E371 serves as the catalytic Proton donor. A disordered region spans residues A460–K479.

It belongs to the glycosyl hydrolase 13 family.

The enzyme catalyses Hydrolysis of (1-&gt;6)-alpha-D-glucosidic linkages to branches with degrees of polymerization of three or four glucose residues in limit dextrin.. Its pathway is glycan degradation; glycogen degradation. In terms of biological role, removes maltotriose and maltotetraose chains that are attached by 1,6-alpha-linkage to the limit dextrin main chain, generating a debranched limit dextrin. This chain is Glycogen debranching enzyme, found in Shigella dysenteriae serotype 1 (strain Sd197).